The primary structure comprises 63 residues: SPbeta prophage-derived uncharacterized protein YotC (63 aa).

This Bacillus subtilis (strain 168) protein is SPbeta prophage-derived uncharacterized protein YotC (yotC).